The following is a 209-amino-acid chain: Probable nicotinate-nucleotide adenylyltransferase (209 aa).

It belongs to the NadD family.

It catalyses the reaction nicotinate beta-D-ribonucleotide + ATP + H(+) = deamido-NAD(+) + diphosphate. The protein operates within cofactor biosynthesis; NAD(+) biosynthesis; deamido-NAD(+) from nicotinate D-ribonucleotide: step 1/1. Its function is as follows. Catalyzes the reversible adenylation of nicotinate mononucleotide (NaMN) to nicotinic acid adenine dinucleotide (NaAD). The sequence is that of Probable nicotinate-nucleotide adenylyltransferase from Shewanella woodyi (strain ATCC 51908 / MS32).